A 241-amino-acid polypeptide reads, in one-letter code: Probable transcriptional regulatory protein Rpic_2388 (241 aa).

Belongs to the TACO1 family.

It is found in the cytoplasm. The chain is Probable transcriptional regulatory protein Rpic_2388 from Ralstonia pickettii (strain 12J).